We begin with the raw amino-acid sequence, 290 residues long: UPF0761 membrane protein YihY (290 aa).

6 consecutive transmembrane segments (helical) span residues 44 to 64 (LLSL…FPMF), 104 to 124 (VGAC…DSAL), 140 to 160 (FAVY…SLAI), 183 to 203 (IFPL…VPTI), 210 to 230 (AIVG…GFAL), and 244 to 264 (VLAV…IVLL).

This sequence belongs to the UPF0761 family.

It is found in the cell inner membrane. This chain is UPF0761 membrane protein YihY, found in Escherichia coli O1:K1 / APEC.